The following is a 1113-amino-acid chain: Potassium channel subfamily U member 1 (1113 aa).

The Extracellular portion of the chain corresponds to 1–24; the sequence is MSQTLLDNLNKKELTETSCTIEIQ. Residues 25–45 traverse the membrane as a helical segment; sequence AAFILSSLATFFGGLIVLFIF. Residues 46 to 101 are Cytoplasmic-facing; it reads RIALKISRNWKTVKGPRGILELFSSRRIEVNPLRKLYFHGVFRERIEMLLSAQTIV. A helical transmembrane segment spans residues 102 to 122; sequence GQVLVILVFVLSIGSLVIYFI. At 123–137 the chain is on the extracellular side; sequence NSMDPVRKCSSYEDK. Residues 138-158 traverse the membrane as a helical segment; the sequence is IVHVDLSFNAFFSFYFGLRFW. Residues 159-165 are Cytoplasmic-facing; the sequence is AAEDKIK. A helical membrane pass occupies residues 166–186; sequence FWLEMNSIVDIFTIPPTFISY. The Extracellular portion of the chain corresponds to 187-188; that stretch reads YL. The helical; Voltage-sensor transmembrane segment at 189 to 209 threads the bilayer; the sequence is KSNWLGLRFLRALRLLELPKI. The Cytoplasmic segment spans residues 210–226; sequence LQILQVIKTSNSVKLSK. The helical transmembrane segment at 227 to 247 threads the bilayer; it reads LMSIVISTWFTAAGFLHLVEN. Residues 248–259 are Extracellular-facing; the sequence is SGDPWLNGRNSQ. The pore-forming intramembrane region spans 260–282; it reads TMSYFESIYLVTATMSTVGFGDV. Topologically, residues 283–290 are extracellular; that stretch reads VAKTSLGR. Residues 291–311 traverse the membrane as a helical segment; it reads IFIVFFTLGSLILFANYIPEM. Topologically, residues 312 to 1113 are cytoplasmic; that stretch reads VELFSTRKKY…FDASDIDPGK (802 aa). 2 consecutive RCK N-terminal domains span residues 331 to 473 and 710 to 881; these read KKFI…DNII and QNHI…DEAI. Positions 1047–1081 are enriched in polar residues; sequence ASIQDQDTTTNVTSMSQGSNFQGAQSALNEHSLSP. Residues 1047–1091 form a disordered region; sequence ASIQDQDTTTNVTSMSQGSNFQGAQSALNEHSLSPASAMGEKKSP.

This sequence belongs to the potassium channel family. Calcium-activated (TC 1.A.1.3) subfamily. KCa1.1/KCNMA1 sub-subfamily. In terms of assembly, homotetramer; which constitutes the activated potassium channel. Interacts with LRRC52; this interaction changes channel gating properties, such as shifting gating to more negative potentials at a given pH.

The protein resides in the cell membrane. Its subcellular location is the cell projection. The protein localises to the cilium. It is found in the flagellum membrane. The enzyme catalyses K(+)(in) = K(+)(out). Its activity is regulated as follows. Regulated by changes in cytosolic pH; activated by alkalization. Not activated by intracellular Ca(2+). VU0546110 acts as a selective inhibitor. The auxiliary subunit LRRC52 shifts the activation of KCNU1 to more negative potentials at a given pH. Functionally, testis-specific potassium channel activated by both intracellular pH and membrane voltage that mediates export of K(+). Represents the primary spermatozoan K(+) current. The channel underlies a pH-triggered membrane hyperpolarization during the process of sperm capacitation, as sperm encounter the alkaline environment near the ovum in the female reproductive tract, thereby playing an essential for male fertility. The chain is Potassium channel subfamily U member 1 (Kcnu1) from Rattus norvegicus (Rat).